The primary structure comprises 341 residues: Small ribosomal subunit biogenesis GTPase RsgA (341 aa).

The CP-type G domain maps to 112–268 (RQQLIAANLD…LIDTPGMREL (157 aa)). GTP contacts are provided by residues 157 to 160 (TKVD) and 210 to 218 (GSSGAGKST). 4 residues coordinate Zn(2+): C290, C295, H297, and C303.

It belongs to the TRAFAC class YlqF/YawG GTPase family. RsgA subfamily. As to quaternary structure, monomer. Associates with 30S ribosomal subunit, binds 16S rRNA. Requires Zn(2+) as cofactor.

It is found in the cytoplasm. Functionally, one of several proteins that assist in the late maturation steps of the functional core of the 30S ribosomal subunit. Helps release RbfA from mature subunits. May play a role in the assembly of ribosomal proteins into the subunit. Circularly permuted GTPase that catalyzes slow GTP hydrolysis, GTPase activity is stimulated by the 30S ribosomal subunit. This chain is Small ribosomal subunit biogenesis GTPase RsgA, found in Xylella fastidiosa (strain 9a5c).